A 143-amino-acid polypeptide reads, in one-letter code: Large ribosomal subunit protein uL11 (143 aa).

It belongs to the universal ribosomal protein uL11 family. As to quaternary structure, part of the ribosomal stalk of the 50S ribosomal subunit. Interacts with L10 and the large rRNA to form the base of the stalk. L10 forms an elongated spine to which L12 dimers bind in a sequential fashion forming a multimeric L10(L12)X complex. Post-translationally, one or more lysine residues are methylated.

In terms of biological role, forms part of the ribosomal stalk which helps the ribosome interact with GTP-bound translation factors. This is Large ribosomal subunit protein uL11 from Teredinibacter turnerae (strain ATCC 39867 / T7901).